The primary structure comprises 556 residues: DNA ligase (556 aa).

An ATP-binding site is contributed by Glu245. Lys247 acts as the N6-AMP-lysine intermediate in catalysis. ATP contacts are provided by Arg252, Arg267, Glu296, Phe336, Arg408, and Lys414.

Belongs to the ATP-dependent DNA ligase family. The cofactor is Mg(2+).

It catalyses the reaction ATP + (deoxyribonucleotide)n-3'-hydroxyl + 5'-phospho-(deoxyribonucleotide)m = (deoxyribonucleotide)n+m + AMP + diphosphate.. Functionally, DNA ligase that seals nicks in double-stranded DNA during DNA replication, DNA recombination and DNA repair. The protein is DNA ligase of Methanosphaerula palustris (strain ATCC BAA-1556 / DSM 19958 / E1-9c).